Here is a 670-residue protein sequence, read N- to C-terminus: MNIPSLFVDPFSPLLEHPTEQRAKNVAHAPKRPCNLTQTEKMLAVRNALRYIPKEHHVLLATEFAEELNTYGHIYGYRFMPNFDLFAPPVSEIGAHCEQASAIILMILNNLDKRVAQFPQELVTYGGNGQVFSNWIQFRLVLRYLYTMTDHQTLVLYSGHPLGLFPSTPDSPRMTVTNGMMIPSYSTKELYDKYFALGVTQYGQMTAGSFCYIGPQGIVHGTTITVLNAGRRMGLDSLAGKVFVTAGLGGMSGAQPKAAKIAGCIGVIAEISDTALLKRHQQGWLDVYSKDLEEIVNWIKEYREKKEAISIGYLGNVVDLWERLAEEPECLVELGSDQTSLHNPFLGGFYPAGLTFEQSNQMMTSDPVKFKKLVQNSLIRQIAAIDKIAAKGMYFWDYGNAFLLECQRAGANLLREDAQDDKSFRYPSYMQDIMGDIFSMGFGPFRWVCTSGKPEDLRLTDQTACKIIDELKDTDVPEYVKQQYLDNKKWIEEAEKNKLVVGSQARILYSDRAGRVALASAFNELVKSGKVSAAIVISRDHHDVSGTDSPFRETSNVYDGSAFTADMAVQNCIGDSFRGATWVALHNGGGVGWGDVINGGFGIVLDGSSDAARRAEGMLNWDVPNGVTRRSWSGNAKAQEAIQRAEKQVDGLRVTLPVEADEELLKKLKF.

NAD(+) contacts are provided by residues glycine 126–glycine 127, glutamine 204, glycine 250–serine 252, glutamate 270, asparagine 316–valine 317, glutamine 338–histidine 342, phenylalanine 349–tyrosine 350, tyrosine 398, and glycine 590.

The protein belongs to the urocanase family. NAD(+) is required as a cofactor.

It catalyses the reaction 4-imidazolone-5-propanoate = trans-urocanate + H2O. The protein operates within amino-acid degradation; L-histidine degradation into L-glutamate; N-formimidoyl-L-glutamate from L-histidine: step 2/3. This chain is Probable urocanate hydratase, found in Caenorhabditis elegans.